A 68-amino-acid polypeptide reads, in one-letter code: Large ribosomal subunit protein bL35 (68 aa).

Belongs to the bacterial ribosomal protein bL35 family.

This chain is Large ribosomal subunit protein bL35, found in Pelagibacter ubique (strain HTCC1062).